A 92-amino-acid chain; its full sequence is Small ribosomal subunit protein uS19c (92 aa).

It belongs to the universal ribosomal protein uS19 family.

It is found in the plastid. Its subcellular location is the chloroplast. Functionally, protein S19 forms a complex with S13 that binds strongly to the 16S ribosomal RNA. In Cycas taitungensis (Prince sago), this protein is Small ribosomal subunit protein uS19c.